A 91-amino-acid polypeptide reads, in one-letter code: Large ribosomal subunit protein uL23c (91 aa).

Belongs to the universal ribosomal protein uL23 family. In terms of assembly, part of the 50S ribosomal subunit.

It is found in the plastid. The protein resides in the chloroplast. In terms of biological role, binds to 23S rRNA. The chain is Large ribosomal subunit protein uL23c (rpl23) from Picea abies (Norway spruce).